The chain runs to 269 residues: Tryptophan synthase alpha chain (269 aa).

Active-site proton acceptor residues include E49 and D60.

This sequence belongs to the TrpA family. In terms of assembly, tetramer of two alpha and two beta chains.

It carries out the reaction (1S,2R)-1-C-(indol-3-yl)glycerol 3-phosphate + L-serine = D-glyceraldehyde 3-phosphate + L-tryptophan + H2O. It functions in the pathway amino-acid biosynthesis; L-tryptophan biosynthesis; L-tryptophan from chorismate: step 5/5. Functionally, the alpha subunit is responsible for the aldol cleavage of indoleglycerol phosphate to indole and glyceraldehyde 3-phosphate. This chain is Tryptophan synthase alpha chain, found in Pseudomonas syringae pv. syringae.